The following is a 664-amino-acid chain: Macoilin (664 aa).

4 helical membrane-spanning segments follow: residues 28–48, 75–95, 120–140, and 154–174; these read TFLY…DFVL, AFSV…LLFI, VCLP…AIRF, and FAAH…KSYV. The segment covering 253–265 has biased composition (basic and acidic residues); sequence REKGKEKDKDAKK. The interval 253-274 is disordered; sequence REKGKEKDKDAKKHNLGINNNN. Ser305 is modified (phosphoserine). Residues 320–348 are compositionally biased toward polar residues; it reads KNYKNASGVVNSSPRSHSATNGSIPSSSS. The tract at residues 320–375 is disordered; the sequence is KNYKNASGVVNSSPRSHSATNGSIPSSSSKNEKKQKCTSKSPSTHKDLMENCIPNN. The N-linked (GlcNAc...) asparagine glycan is linked to Asn324. The residue at position 332 (Ser332) is a Phosphoserine. N-linked (GlcNAc...) asparagine glycosylation is found at Asn340 and Asn452. The segment at 630-664 is disordered; that stretch reads TSPLSPVSPHYSSKFVETSPSGLDPNASVYQPLKK. A phosphoserine mark is found at Ser631 and Ser634. Asn655 carries an N-linked (GlcNAc...) asparagine glycan.

It belongs to the macoilin family.

It localises to the rough endoplasmic reticulum membrane. Its subcellular location is the nucleus membrane. Functionally, plays a role in the regulation of neuronal activity. The chain is Macoilin (MACO1) from Macaca mulatta (Rhesus macaque).